The primary structure comprises 598 residues: Insulin-like growth factor 2 mRNA-binding protein 1 (598 aa).

RRM domains follow at residues 2–75 (NKLY…HSVP) and 81–156 (RKLQ…YIPD). The segment at 155 to 195 (PDENSEVDSQRGPDNGRRPGYGPRGTSRQMSPGSGIPSKHQ) is disordered. Basic and acidic residues predominate over residues 162 to 171 (DSQRGPDNGR). Phosphoserine is present on Ser-185. KH domains follow at residues 198–263 (DIPL…CRMI) and 279–346 (EVPL…EQEI). Tyr-399 is modified (phosphotyrosine). 2 KH domains span residues 407 to 472 (QETV…QGRI) and 489 to 555 (KLET…QRKI). Residues 561 to 598 (QVKQQQKGGGMGTPQGPHPQGMTELGSPQGLAQEPRRK) form a disordered region. Phosphothreonine is present on residues Thr-573 and Thr-583. Residues 574-583 (PQGPHPQGMT) are compositionally biased toward low complexity. A Phosphoserine modification is found at Ser-587.

This sequence belongs to the RRM IMP/VICKZ family. As to quaternary structure, component of the CRD-mediated complex.

Its subcellular location is the nucleus. The protein resides in the cytoplasm. It localises to the perinuclear region. The protein localises to the P-body. It is found in the stress granule. Its subcellular location is the cell projection. The protein resides in the growth cone. It localises to the filopodium. The protein localises to the lamellipodium. In terms of biological role, RNA-binding factor that recruits target transcripts to cytoplasmic protein-RNA complexes (mRNPs). This transcript 'caging' into mRNPs allows mRNA transport and transient storage. It also modulates the rate and location at which target transcripts encounter the translational apparatus and shields them from endonuclease attacks or microRNA-mediated degradation. Preferentially binds to N6-methyladenosine (m6A)-containing mRNAs and increases their stability. Plays a direct role in the transport and translation of transcripts required for axonal regeneration in adult sensory neurons. Regulates localized beta-actin/ACTB mRNA translation in polarized cells, a crucial process for cell migration and neurite outgrowth. Promotes the directed movement of cells by fine-tuning intracellular signaling networks and enhances the velocity of cell migration. The protein is Insulin-like growth factor 2 mRNA-binding protein 1 (igf2bp1) of Danio rerio (Zebrafish).